We begin with the raw amino-acid sequence, 418 residues long: AA14 family lytic polysaccharide monooxygenase B (418 aa).

The first 18 residues, 1–18 (MIPVFLAAVAAFLPLTSG), serve as a signal peptide directing secretion. 3 N-linked (GlcNAc...) asparagine glycosylation sites follow: asparagine 31, asparagine 94, and asparagine 151. Intrachain disulfides connect cysteine 85/cysteine 108, cysteine 127/cysteine 154, cysteine 171/cysteine 176, and cysteine 178/cysteine 200. Asparagine 201 and asparagine 235 each carry an N-linked (GlcNAc...) asparagine glycan. A disulfide bridge connects residues cysteine 220 and cysteine 236. Positions 307–343 (AAATPAPSSSGSSPSSSSPGSSSTASTTSTSGPRPSA) are enriched in low complexity. Residues 307–364 (AAATPAPSSSGSSPSSSSPGSSSTASTTSTSGPRPSARGFRRSTGERPPTGVPTPRKS) form a disordered region.

It belongs to the polysaccharide monooxygenase AA14 family. Cu(2+) is required as a cofactor.

It localises to the secreted. In terms of biological role, lytic polysaccharide monooxygenase (LPMO) that oxidatively cleaves xylan with both C1 and C4 regioselectivity and that specifically targets the protective shield made by heteroxylans that cover cellulose microfibrils in wood. Catalysis by LPMOs requires the reduction of the active-site copper from Cu(II) to Cu(I) by a reducing agent and H(2)O(2) or O(2) as a cosubstrate. Cleavage occurs only when xylans are bound to cellulose and not when they are in solution. Increases the efficiency of wood saccharification through oxidative cleavage of highly refractory xylan-coated cellulose fibers via synergistic relationship with xylan-active enzymes, xylobiohydrolases and cellobiohydrolases. This is AA14 family lytic polysaccharide monooxygenase B from Trametes coccinea (strain BRFM310) (Pycnoporus coccineus).